Consider the following 237-residue polypeptide: Carboxy-S-adenosyl-L-methionine synthase (237 aa).

Residues tyrosine 36, 61–63 (GAS), 86–87 (DN), 112–113 (DI), asparagine 127, and arginine 194 each bind S-adenosyl-L-methionine.

It belongs to the class I-like SAM-binding methyltransferase superfamily. Cx-SAM synthase family. In terms of assembly, homodimer.

The enzyme catalyses prephenate + S-adenosyl-L-methionine = carboxy-S-adenosyl-L-methionine + 3-phenylpyruvate + H2O. Catalyzes the conversion of S-adenosyl-L-methionine (SAM) to carboxy-S-adenosyl-L-methionine (Cx-SAM). This is Carboxy-S-adenosyl-L-methionine synthase from Ruthia magnifica subsp. Calyptogena magnifica.